Reading from the N-terminus, the 382-residue chain is uncharacterized protein (382 aa).

Transmembrane regions (helical) follow at residues 14–34 (GLLLLTLAIAVLNTLVPLWLA), 45–65 (VVSSSYFTGNLVGTLLTGYVI), 79–99 (FIFAAGCAGLGLMIGFWSWLA), 102–122 (FVAGVGCAMIWVVVESALMCS), 131–151 (LLAAYMMVYYVGTFLGQLLVS), 157–177 (LMSVLPWVTGLTLAGILPLLF), 204–224 (LGVNGCIISGIVLGSLYGLMP), 235–255 (ASIGFWMAVLVSAGILGQWPI), 270–290 (VQVFVVILGSIAMLSQAAMAP), 291–311 (ALFILGAAGFTLYPVAMAWAC), 325–345 (ALLLSYTVGSLLGPSFTAMLM), and 348–368 (FSDNLLFIMIASVSFIYLLML).

Belongs to the major facilitator superfamily. YcaD (TC 2.A.1.26) family.

Its subcellular location is the cell inner membrane. This is an uncharacterized protein from Shigella dysenteriae serotype 1 (strain Sd197).